Consider the following 1084-residue polypeptide: Putative tRNA-specific 2-thiouridylase (1084 aa).

The next 3 helical transmembrane spans lie at 1–21 (MLIF…FILT), 32–52 (FIIS…FYVI), and 309–329 (IITI…YLIL). Cys538 functions as the Nucleophile in the catalytic mechanism. Cys538 and Cys715 are disulfide-bonded. Cys715 acts as the Cysteine persulfide intermediate in catalysis.

This sequence belongs to the MnmA/TRMU family.

The protein localises to the plastid. It localises to the apicoplast. The protein resides in the membrane. The catalysed reaction is S-sulfanyl-L-cysteinyl-[protein] + uridine(34) in tRNA + AH2 + ATP = 2-thiouridine(34) in tRNA + L-cysteinyl-[protein] + A + AMP + diphosphate + H(+). Catalyzes the 2-thiolation of uridine at the wobble position (U34) of tRNA, leading to the formation of s(2)U34. Required for apicoplast maintenance. The sequence is that of Putative tRNA-specific 2-thiouridylase from Plasmodium falciparum (isolate 3D7).